We begin with the raw amino-acid sequence, 331 residues long: Sideroflexin-5 (331 aa).

4 consecutive transmembrane segments (helical) span residues proline 104–tryptophan 126, tyrosine 153–isoleucine 175, threonine 243–leucine 265, and histidine 278–leucine 300.

Belongs to the sideroflexin family.

The protein localises to the mitochondrion inner membrane. The catalysed reaction is citrate(in) = citrate(out). Its function is as follows. Mitochondrial amino-acid transporter. The chain is Sideroflexin-5 from Caenorhabditis elegans.